Here is a 291-residue protein sequence, read N- to C-terminus: Ribosomal RNA small subunit methyltransferase A (291 aa).

S-adenosyl-L-methionine contacts are provided by asparagine 33, valine 35, glycine 60, glutamate 81, aspartate 111, and asparagine 129.

Belongs to the class I-like SAM-binding methyltransferase superfamily. rRNA adenine N(6)-methyltransferase family. RsmA subfamily.

The protein localises to the cytoplasm. The enzyme catalyses adenosine(1518)/adenosine(1519) in 16S rRNA + 4 S-adenosyl-L-methionine = N(6)-dimethyladenosine(1518)/N(6)-dimethyladenosine(1519) in 16S rRNA + 4 S-adenosyl-L-homocysteine + 4 H(+). Functionally, specifically dimethylates two adjacent adenosines (A1518 and A1519) in the loop of a conserved hairpin near the 3'-end of 16S rRNA in the 30S particle. May play a critical role in biogenesis of 30S subunits. The sequence is that of Ribosomal RNA small subunit methyltransferase A from Streptomyces griseus subsp. griseus (strain JCM 4626 / CBS 651.72 / NBRC 13350 / KCC S-0626 / ISP 5235).